The sequence spans 282 residues: tRNA (guanine-N(1)-)-methyltransferase (282 aa).

S-adenosyl-L-methionine-binding positions include Gly-157 and 177–182; that span reads VGDYIL.

This sequence belongs to the RNA methyltransferase TrmD family. In terms of assembly, homodimer.

It localises to the cytoplasm. It carries out the reaction guanosine(37) in tRNA + S-adenosyl-L-methionine = N(1)-methylguanosine(37) in tRNA + S-adenosyl-L-homocysteine + H(+). Functionally, specifically methylates guanosine-37 in various tRNAs. The sequence is that of tRNA (guanine-N(1)-)-methyltransferase from Rickettsia bellii (strain RML369-C).